The sequence spans 309 residues: Short-chain dehydrogenase/reductase ARMGADRAFT_1018437 (309 aa).

Residues Lys64, Asp86, and Asn113 each contribute to the NADP(+) site. Ser167 functions as the Proton donor in the catalytic mechanism. 2 residues coordinate NADP(+): Tyr196 and Lys200. The active-site Proton acceptor is the Tyr196. The Lowers pKa of active site Tyr role is filled by Lys200.

This sequence belongs to the short-chain dehydrogenases/reductases (SDR) family.

Its pathway is secondary metabolite biosynthesis. Short-chain dehydrogenase/reductase, part of the gene cluster that mediates the biosynthesis of melleolides, a range of antifungal and phytotoxic polyketide derivatives composed of an orsellinic acid (OA) moiety esterified to various sesquiterpene alcohols. The first step in melleolides biosynthesis is performed by the delta(6)-protoilludene synthase PRO1 which catalyzes the cyclization of farnesyl diphosphate to protoilludene. The orsellinic acid synthase armB produces OA by condensing acetyl-CoA with 3 malonyl-CoA units in a three-round chain elongation reaction folowed by a C2-C7 ring closure. ArmB further catalyzes the trans-esterification of OA to the various sesquiterpene alcohols resulting from the hydroxylation of protoilludene. The melleolides cluster also includes 5 cytochrome P450 monooxygenases, 4 NAD(+)-dependent oxidoreductases, one flavin-dependent oxidoreductase, and one O-methyltransferase. The cytochrome P450 monooxygenases may be involved in protoilludene hydroxylation to elaborate melleolides with multiple alcohol groups, such as melleolide D, which carries alcohol functionalities at C-4, C-5, C-10, and C-13. The role of the NAD(+)-dependent enzymes remains unknown. Numerous melleolides, including arnamial, show 5'-O-methylation of the aromatic moiety which may be catalyzed by the methyltransferase encoded in the cluster. The flavin-dependent oxidoreductase might represent the dehydrogenase yielding the aldehyde in position 1 of arnamial and other melleolides. Finally, several halogenase localized outside of the cluster, are able to catalyze the transfer of a single chlorine atom to the melleolide backbone, resulting in a 6'-chloromelleolide product. In Armillaria gallica (Bulbous honey fungus), this protein is Short-chain dehydrogenase/reductase ARMGADRAFT_1018437.